The chain runs to 465 residues: MTNTTQDKKLWGGRFAEATDGLVELFNASVAFDQRLAEQDIRGSLAHVAMLGQTGILTPDEVAQIEEGLQGILADIRAGRFDWRLDREDVHMNVEAALRDRIGPVAGKLHTARSRNDQVAVDFRLFTKEAALDLAAKVRALRAVLVAEAEKHLQDEVILPGYTHLQVAQPILLSHWLMAYAAMLERDEGRFRDAAERMDESPLGSSALAGTPWPIDRFATAAALGFARPTANSLDGVGSRDFALEFLSACAILAAHLSRLSEELILYSTFEFGFLTLPDSHTTGSSIMPQKKNPDVAELARGKAGRVFGNLMGLLTVVKGTPLAYNKDLQEDKEGVFDSYDTLSIVLRLYADMLPKTVWHADVTKLAAARGFSTATDLADFLARSGVPFREAHEVVGRLVGLASRTGRQLWDLTDEELRAAHPLLSAEVARALTVEESVKSRRSYGGTAPERVREQVAAAKAALS.

It belongs to the lyase 1 family. Argininosuccinate lyase subfamily.

Its subcellular location is the cytoplasm. The catalysed reaction is 2-(N(omega)-L-arginino)succinate = fumarate + L-arginine. The protein operates within amino-acid biosynthesis; L-arginine biosynthesis; L-arginine from L-ornithine and carbamoyl phosphate: step 3/3. The chain is Argininosuccinate lyase from Deinococcus geothermalis (strain DSM 11300 / CIP 105573 / AG-3a).